The following is a 558-amino-acid chain: Phosphatidylserine lipase ABHD16A (558 aa).

Transmembrane regions (helical) follow at residues 60 to 80 (ILAL…FAFF) and 93 to 113 (VVPF…VACL). Residues 114-558 (RGIGRWTNPQ…AQNFQMPWHL (445 aa)) are Cytoplasmic-facing. One can recognise an AB hydrolase-1 domain in the interval 281–407 (LVICCEGNAG…LVTRTVRQHL (127 aa)). Active-site charge relay system residues include Ser355, Asp430, and His507.

This sequence belongs to the AB hydrolase superfamily. ABHD16 family.

Its subcellular location is the membrane. It catalyses the reaction 1-heptadecanoyl-2-(5Z,8Z,11Z,14Z-eicosatetraenoyl)-sn-glycero-3-phosphoserine + H2O = 1-heptadecanoyl-sn-glycero-3-phosphoserine + (5Z,8Z,11Z,14Z)-eicosatetraenoate + H(+). The enzyme catalyses 1-hexadecanoyl-2-(9Z-octadecenoyl)-sn-glycero-3-phospho-L-serine + H2O = 1-hexadecanoyl-sn-glycero-3-phospho-L-serine + (9Z)-octadecenoate + H(+). It carries out the reaction 1-octadecanoyl-2-(9Z,12Z-octadecadienoyl)-sn-glycero-3-phosphoserine + H2O = 1-octadecanoyl-sn-glycero-3-phosphoserine + (9Z,12Z)-octadecadienoate + H(+). The catalysed reaction is 1-heptadecanoyl-2-(5Z,8Z,11Z,14Z-eicosatetraenoyl)-sn-glycero-3-phosphocholine + H2O = 1-heptadecanoyl-sn-glycero-3-phosphocholine + (5Z,8Z,11Z,14Z)-eicosatetraenoate + H(+). It catalyses the reaction 1-hexadecanoyl-2-(9Z-octadecenoyl)-sn-glycero-3-phosphoglycerol + H2O = 1-hexadecanoyl-sn-glycero-3-phosphoglycerol + (9Z)-octadecenoate + H(+). The enzyme catalyses 1-hexadecanoyl-2-(9Z-octadecenoyl)-sn-glycero-3-phospho-(1D-myo-inositol) + H2O = 1-hexadecanoyl-sn-glycero-3-phospho-(1D-myo-inositol) + (9Z)-octadecenoate + H(+). It carries out the reaction 1-heptadecanoyl-2-(5Z,8Z,11Z,14Z-eicosatetraenoyl)-sn-glycero-3-phosphoethanolamine + H2O = 1-heptadecanoyl-sn-glycero-3-phosphoethanolamine + (5Z,8Z,11Z,14Z)-eicosatetraenoate + H(+). The catalysed reaction is 1-hexadecanoyl-2-(9Z-octadecenoyl)-sn-glycero-3-phospho-(1'-sn-glycerol) + H2O = 1-hexadecanoyl-sn-glycero-3-phospho-(1'-sn-glycerol) + (9Z)-octadecenoate + H(+). It catalyses the reaction Hydrolyzes glycerol monoesters of long-chain fatty acids.. The enzyme catalyses 1-tetradecanoylglycerol + H2O = tetradecanoate + glycerol + H(+). It carries out the reaction 2-hexadecanoylglycerol + H2O = glycerol + hexadecanoate + H(+). The catalysed reaction is 1-(9Z-octadecenoyl)-glycerol + H2O = glycerol + (9Z)-octadecenoate + H(+). It catalyses the reaction 2-(9Z-octadecenoyl)-glycerol + H2O = glycerol + (9Z)-octadecenoate + H(+). The enzyme catalyses 2-(9Z,12Z-octadecadienoyl)-glycerol + H2O = (9Z,12Z)-octadecadienoate + glycerol + H(+). It carries out the reaction 1-(5Z,8Z,11Z,14Z-eicosatetraenoyl)-glycerol + H2O = glycerol + (5Z,8Z,11Z,14Z)-eicosatetraenoate + H(+). The catalysed reaction is 2-(5Z,8Z,11Z,14Z-eicosatetraenoyl)-glycerol + H2O = glycerol + (5Z,8Z,11Z,14Z)-eicosatetraenoate + H(+). It catalyses the reaction prostaglandin D2-1-glycerol ester + H2O = prostaglandin D2 + glycerol + H(+). The enzyme catalyses 2-glyceryl-15-deoxy-Delta(12,14)-prostaglandin J2 + H2O = 15-deoxy-Delta(12,14)-prostaglandin J2 + glycerol + H(+). It carries out the reaction 1-(9Z,12Z-octadecadienoyl)-glycerol + H2O = (9Z,12Z)-octadecadienoate + glycerol + H(+). Phosphatidylserine (PS) lipase that mediates the hydrolysis of phosphatidylserine to generate lysophosphatidylserine (LPS). LPS constitutes a class of signaling lipids that regulates immunological and neurological processes. Has no activity towards diacylglycerol, triacylglycerol or lysophosphatidylserine lipase. Also has monoacylglycerol lipase activity, with preference for 1-(9Z,12Z-octadecadienoyl)-glycerol (1-LG) and 2-glyceryl-15-deoxy-Delta(12,14)-prostaglandin J2 (15d-PGJ(2)-G). The polypeptide is Phosphatidylserine lipase ABHD16A (Bos taurus (Bovine)).